The following is a 365-amino-acid chain: LIM and cysteine-rich domains protein 1 (365 aa).

At S16 the chain carries Phosphoserine. Residues 99-206 (MIMTNPIATG…GEVALPGQGG (108 aa)) form the PET domain. Residues 200–235 (ALPGQGGLPKEEGKQQEKPEGAETTAATTNGSLSDP) form a disordered region. Residues 208 to 220 (PKEEGKQQEKPEG) are compositionally biased toward basic and acidic residues. 2 LIM zinc-binding domains span residues 241–306 (YVCE…SLRP) and 307–365 (RCSG…SKRS).

In terms of assembly, interacts with GATA1 and GATA4. Interacts with beta-dystroglycan. Interacts with GATA6. In terms of tissue distribution, expressed in the heart (at protein level). Expressed in many tissues with highest abundance in skeletal muscle.

It localises to the cytoplasm. It is found in the nucleus. Functionally, transcriptional cofactor that restricts GATA6 function by inhibiting DNA-binding, resulting in repression of GATA6 transcriptional activation of downstream target genes. Represses GATA6-mediated trans activation of lung- and cardiac tissue-specific promoters. Inhibits DNA-binding by GATA4 and GATA1 to the cTNC promoter. Plays a critical role in the development of cardiac hypertrophy via activation of calcineurin/nuclear factor of activated T-cells signaling pathway. The polypeptide is LIM and cysteine-rich domains protein 1 (LMCD1) (Homo sapiens (Human)).